A 348-amino-acid chain; its full sequence is Alcohol dehydrogenase 2 (348 aa).

S2 carries the post-translational modification N-acetylserine. Residue C44 participates in Zn(2+) binding. NAD(+)-binding residues include H45, T46, and H49. Zn(2+) is bound by residues H67, E68, C98, C101, C104, C112, and C154. G181, G182, L183, D202, and K207 together coordinate NAD(+). S213 carries the post-translational modification Phosphoserine. F222 serves as a coordination point for NAD(+). A Phosphothreonine modification is found at T223. Residues K226 and K234 each participate in a glycyl lysine isopeptide (Lys-Gly) (interchain with G-Cter in ubiquitin) cross-link. V269 is a binding site for NAD(+). S279 carries the phosphoserine modification. K287 is covalently cross-linked (Glycyl lysine isopeptide (Lys-Gly) (interchain with G-Cter in ubiquitin)). 2 residues coordinate NAD(+): S294 and V296. S316 is modified (phosphoserine). A Glycyl lysine isopeptide (Lys-Gly) (interchain with G-Cter in ubiquitin) cross-link involves residue K319. R341 serves as a coordination point for NAD(+).

It belongs to the zinc-containing alcohol dehydrogenase family. As to quaternary structure, homotetramer. Requires Zn(2+) as cofactor.

It is found in the cytoplasm. It carries out the reaction a primary alcohol + NAD(+) = an aldehyde + NADH + H(+). The enzyme catalyses a secondary alcohol + NAD(+) = a ketone + NADH + H(+). The catalysed reaction is ethanol + NAD(+) = acetaldehyde + NADH + H(+). It catalyses the reaction butan-1-ol + NAD(+) = butanal + NADH + H(+). It carries out the reaction hexan-1-ol + NAD(+) = hexanal + NADH + H(+). Functionally, preferentially oxidative, glucose-repressed isozyme that catalyzes the conversion of ethanol to acetaldehyde. Main enzyme involved in ethanol consumption. Acts on a variety of primary unbranched aliphatic alcohols. Also produces ethanol from glucose, albeit less than ADH1. This chain is Alcohol dehydrogenase 2 (ADH2), found in Saccharomyces cerevisiae (strain ATCC 204508 / S288c) (Baker's yeast).